The primary structure comprises 349 residues: Cyclic amide hydrolase (349 aa).

The tract at residues 1 to 90 (MTSPEDTAGV…AVFVDDPASS (90 aa)) is RU A. Residue R38 participates in substrate binding. Residues 99–231 (GLSIGVTTTA…AAVLVMGNSP (133 aa)) are RU B. K149 is a catalytic residue. Residues R176, 214-215 (SA), K311, and 330-331 (SG) contribute to the substrate site. S214 serves as the catalytic Nucleophile. Residues 237–349 (YRIGHGVLRD…GGGTVAVIAR (113 aa)) form an RU C region.

The protein belongs to the cyclic amide hydrolase (CyAH) family. As to quaternary structure, homotetramer.

Cyclic amide hydrolase of unknown substrate specificity. Catalyzes the hydrolytic ring-opening of a cyclic amide. Does not act on cyanuric acid nor barbituric acid. This is Cyclic amide hydrolase from Rhodococcus sp.